The sequence spans 106 residues: ATP-dependent Clp protease adapter protein ClpS (106 aa).

A compositionally biased stretch (basic and acidic residues) spans 1–13 (MPRNTSHEHDHGL). The disordered stretch occupies residues 1 to 20 (MPRNTSHEHDHGLMVEASKP).

It belongs to the ClpS family. In terms of assembly, binds to the N-terminal domain of the chaperone ClpA.

Its function is as follows. Involved in the modulation of the specificity of the ClpAP-mediated ATP-dependent protein degradation. In Xanthomonas axonopodis pv. citri (strain 306), this protein is ATP-dependent Clp protease adapter protein ClpS.